Reading from the N-terminus, the 129-residue chain is Glycine cleavage system H protein (129 aa).

One can recognise a Lipoyl-binding domain in the interval Ser-23–Ser-105. Lys-64 carries the N6-lipoyllysine modification.

Belongs to the GcvH family. In terms of assembly, the glycine cleavage system is composed of four proteins: P, T, L and H. (R)-lipoate is required as a cofactor.

The glycine cleavage system catalyzes the degradation of glycine. The H protein shuttles the methylamine group of glycine from the P protein to the T protein. In Herpetosiphon aurantiacus (strain ATCC 23779 / DSM 785 / 114-95), this protein is Glycine cleavage system H protein.